The following is a 325-amino-acid chain: Serine/threonine-protein phosphatase 2A activator 1 (325 aa).

Belongs to the PTPA-type PPIase family.

It localises to the cytoplasm. It is found in the nucleus. It carries out the reaction [protein]-peptidylproline (omega=180) = [protein]-peptidylproline (omega=0). Its function is as follows. PPIases accelerate the folding of proteins. It catalyzes the cis-trans isomerization of proline imidic peptide bonds in oligopeptides. Acts as a regulatory subunit for PP2A-like phosphatases modulating their activity or substrate specificity, probably by inducing a conformational change in the catalytic subunit, a direct target of the PPIase. Can reactivate inactive phosphatase PP2A-phosphatase methylesterase complexes (PP2Ai) in presence of ATP and Mg(2+) by dissociating the inactive form from the complex. The polypeptide is Serine/threonine-protein phosphatase 2A activator 1 (rrd1) (Schizosaccharomyces pombe (strain 972 / ATCC 24843) (Fission yeast)).